Here is a 185-residue protein sequence, read N- to C-terminus: Probable chorismate pyruvate-lyase 2 (185 aa).

Residues Arg80, Leu118, and Glu170 each contribute to the substrate site.

Belongs to the UbiC family.

The protein localises to the cytoplasm. The enzyme catalyses chorismate = 4-hydroxybenzoate + pyruvate. It participates in cofactor biosynthesis; ubiquinone biosynthesis. Functionally, removes the pyruvyl group from chorismate, with concomitant aromatization of the ring, to provide 4-hydroxybenzoate (4HB) for the ubiquinone pathway. This Pseudomonas entomophila (strain L48) protein is Probable chorismate pyruvate-lyase 2.